The primary structure comprises 126 residues: uncharacterized protein (126 aa).

This is an uncharacterized protein from Agrobacterium tumefaciens (strain 15955).